The chain runs to 266 residues: DNA damage-regulated autophagy modulator protein 2 (266 aa).

The next 6 membrane-spanning stretches (helical) occupy residues 8–28, 53–73, 88–108, 118–138, 160–180, and 207–227; these read LSFL…FSYI, KCLF…TIYV, IIKL…GLSI, FAAH…YMFV, LLLV…SSVL, and ITTA…LTYI.

The protein belongs to the DRAM/TMEM150 family. In terms of tissue distribution, expression is down-regulated in ovarian tumors (at protein level). Widely expressed with highest levels in placenta and heart. Expressed in the retina. Not detected in brain or thymus.

Its subcellular location is the lysosome membrane. The protein resides in the photoreceptor inner segment. It is found in the apical cell membrane. Its function is as follows. Plays a role in the initiation of autophagy. In the retina, might be involved in the process of photoreceptor cells renewal and recycling to preserve visual function. Induces apoptotic cell death when coexpressed with DRAM1. This is DNA damage-regulated autophagy modulator protein 2 (DRAM2) from Homo sapiens (Human).